Consider the following 237-residue polypeptide: Ribonuclease 3 (237 aa).

One can recognise an RNase III domain in the interval leucine 6 to glycine 133. Glutamate 46 contributes to the Mg(2+) binding site. Aspartate 50 is an active-site residue. The Mg(2+) site is built by aspartate 119 and glutamate 122. Glutamate 122 is an active-site residue. Residues aspartate 160–glutamate 229 form the DRBM domain.

The protein belongs to the ribonuclease III family. Homodimer. It depends on Mg(2+) as a cofactor.

Its subcellular location is the cytoplasm. The enzyme catalyses Endonucleolytic cleavage to 5'-phosphomonoester.. In terms of biological role, digests double-stranded RNA. Involved in the processing of primary rRNA transcript to yield the immediate precursors to the large and small rRNAs (23S and 16S). Processes some mRNAs, and tRNAs when they are encoded in the rRNA operon. Processes pre-crRNA and tracrRNA of type II CRISPR loci if present in the organism. The polypeptide is Ribonuclease 3 (Clostridium perfringens (strain 13 / Type A)).